The sequence spans 269 residues: Shikimate dehydrogenase (NADP(+)) (269 aa).

Shikimate-binding positions include 17-19 (SKS) and T64. The Proton acceptor role is filled by K68. NADP(+) is bound at residue E80. Shikimate is bound by residues N89 and D105. NADP(+) contacts are provided by residues 130-134 (GAGGA), 154-159 (NRTRAK), and M213. Residue Y215 participates in shikimate binding. G237 is an NADP(+) binding site.

Belongs to the shikimate dehydrogenase family. Homodimer.

The enzyme catalyses shikimate + NADP(+) = 3-dehydroshikimate + NADPH + H(+). It functions in the pathway metabolic intermediate biosynthesis; chorismate biosynthesis; chorismate from D-erythrose 4-phosphate and phosphoenolpyruvate: step 4/7. Its function is as follows. Involved in the biosynthesis of the chorismate, which leads to the biosynthesis of aromatic amino acids. Catalyzes the reversible NADPH linked reduction of 3-dehydroshikimate (DHSA) to yield shikimate (SA). In Neisseria lactamica, this protein is Shikimate dehydrogenase (NADP(+)).